Consider the following 201-residue polypeptide: Recombination protein RecR (201 aa).

A C4-type zinc finger spans residues 60 to 75 (CSCCGNVDTSDPCTIC). In terms of domain architecture, Toprim spans 83 to 178 (ATLIVVEDVS…RVTRLAHGVP (96 aa)).

Belongs to the RecR family.

Functionally, may play a role in DNA repair. It seems to be involved in an RecBC-independent recombinational process of DNA repair. It may act with RecF and RecO. The chain is Recombination protein RecR from Brucella melitensis biotype 1 (strain ATCC 23456 / CCUG 17765 / NCTC 10094 / 16M).